Consider the following 649-residue polypeptide: 1-deoxy-D-xylulose-5-phosphate synthase (649 aa).

Thiamine diphosphate contacts are provided by residues His-74 and 115-117 (GHA). Asp-146 is a binding site for Mg(2+). Thiamine diphosphate contacts are provided by residues 147–148 (GA), Asn-176, Tyr-292, and Glu-375. Asn-176 is a binding site for Mg(2+).

This sequence belongs to the transketolase family. DXPS subfamily. Homodimer. It depends on Mg(2+) as a cofactor. The cofactor is thiamine diphosphate.

The enzyme catalyses D-glyceraldehyde 3-phosphate + pyruvate + H(+) = 1-deoxy-D-xylulose 5-phosphate + CO2. It functions in the pathway metabolic intermediate biosynthesis; 1-deoxy-D-xylulose 5-phosphate biosynthesis; 1-deoxy-D-xylulose 5-phosphate from D-glyceraldehyde 3-phosphate and pyruvate: step 1/1. In terms of biological role, catalyzes the acyloin condensation reaction between C atoms 2 and 3 of pyruvate and glyceraldehyde 3-phosphate to yield 1-deoxy-D-xylulose-5-phosphate (DXP). This Synechococcus sp. (strain JA-3-3Ab) (Cyanobacteria bacterium Yellowstone A-Prime) protein is 1-deoxy-D-xylulose-5-phosphate synthase.